Consider the following 390-residue polypeptide: Phosphopentomutase (390 aa).

Asp14, Asp286, His291, Asp327, His328, and His339 together coordinate Mn(2+).

This sequence belongs to the phosphopentomutase family. Mn(2+) serves as cofactor.

It is found in the cytoplasm. The catalysed reaction is 2-deoxy-alpha-D-ribose 1-phosphate = 2-deoxy-D-ribose 5-phosphate. It carries out the reaction alpha-D-ribose 1-phosphate = D-ribose 5-phosphate. The protein operates within carbohydrate degradation; 2-deoxy-D-ribose 1-phosphate degradation; D-glyceraldehyde 3-phosphate and acetaldehyde from 2-deoxy-alpha-D-ribose 1-phosphate: step 1/2. Its function is as follows. Isomerase that catalyzes the conversion of deoxy-ribose 1-phosphate (dRib-1-P) and ribose 1-phosphate (Rib-1-P) to deoxy-ribose 5-phosphate (dRib-5-P) and ribose 5-phosphate (Rib-5-P), respectively. In Exiguobacterium sibiricum (strain DSM 17290 / CCUG 55495 / CIP 109462 / JCM 13490 / 255-15), this protein is Phosphopentomutase.